A 42-amino-acid chain; its full sequence is Iota-conotoxin-like R11.15 (42 aa).

4 disulfides stabilise this stretch: cysteine 5–cysteine 19, cysteine 12–cysteine 22, cysteine 18–cysteine 27, and cysteine 21–cysteine 36.

Belongs to the conotoxin I1 superfamily. In terms of tissue distribution, expressed by the venom duct.

Its subcellular location is the secreted. In terms of biological role, iota-conotoxins bind to voltage-gated sodium channels (Nav) and act as agonists by shifting the voltage-dependence of activation to more hyperpolarized levels. Produces general excitatory symptoms. This chain is Iota-conotoxin-like R11.15, found in Conus radiatus (Rayed cone).